The chain runs to 481 residues: Uridine 5'-monophosphate synthase (481 aa).

Residues 1–214 are OPRTase; the sequence is MEVASQALGP…VFSAANHNGL (214 aa). Position 37 is a phosphotyrosine (tyrosine 37). The segment at 215–220 is domain linker; that stretch reads PPPEKK. Residues 221 to 481 are OMPdecase; the sequence is ACKELSFGAR…EAYLSRLAVQ (261 aa). Serine 257 is a binding site for orotidine 5'-phosphate. UMP is bound by residues serine 257, aspartate 259, and 281–283; that span reads KTH. Residues lysine 281, lysine 314, aspartate 317, threonine 321, serine 372, 430-432, and 450-451 each bind orotidine 5'-phosphate; these read QQY and GR. Active-site for OMPdecase activity residues include lysine 314 and aspartate 317. UMP is bound by residues aspartate 317, threonine 321, serine 372, 430–432, and 450–451; these read QQY and GR.

In the N-terminal section; belongs to the purine/pyrimidine phosphoribosyltransferase family. It in the C-terminal section; belongs to the OMP decarboxylase family. As to quaternary structure, homodimer; dimerization is required for enzymatic activity.

It carries out the reaction orotidine 5'-phosphate + diphosphate = orotate + 5-phospho-alpha-D-ribose 1-diphosphate. It catalyses the reaction orotidine 5'-phosphate + H(+) = UMP + CO2. Its pathway is pyrimidine metabolism; UMP biosynthesis via de novo pathway; UMP from orotate: step 1/2. It functions in the pathway pyrimidine metabolism; UMP biosynthesis via de novo pathway; UMP from orotate: step 2/2. Functionally, bifunctional enzyme catalyzing the last two steps of de novo pyrimidine biosynthesis, orotate phosphoribosyltransferase (OPRT), which converts orotate to orotidine-5'-monophosphate (OMP), and orotidine-5'-monophosphate decarboxylase (ODC), the terminal enzymatic reaction that decarboxylates OMP to uridine monophosphate (UMP). The chain is Uridine 5'-monophosphate synthase (Umps) from Mus musculus (Mouse).